Consider the following 20-residue polypeptide: Insulin-like growth factor-binding protein 2 (20 aa).

Residues 2–20 enclose the IGFBP N-terminal domain; the sequence is LVFYCPKCTAERQTACPKL.

As to quaternary structure, binds IGF2 more than IGF1. Post-translationally, N-glycosylated.

It localises to the secreted. Its function is as follows. Inhibits IGF-mediated growth and developmental rates. IGF-binding proteins prolong the half-life of the IGFs and have been shown to either inhibit or stimulate the growth promoting effects of the IGFs on cell culture. They alter the interaction of IGFs with their cell surface receptors. The chain is Insulin-like growth factor-binding protein 2 (igfbp2) from Oncorhynchus tshawytscha (Chinook salmon).